A 525-amino-acid chain; its full sequence is ATP synthase subunit alpha (525 aa).

171-178 lines the ATP pocket; it reads GDRQTGKS.

Belongs to the ATPase alpha/beta chains family. In terms of assembly, F-type ATPases have 2 components, CF(1) - the catalytic core - and CF(0) - the membrane proton channel. CF(1) has five subunits: alpha(3), beta(3), gamma(1), delta(1), epsilon(1). CF(0) has three main subunits: a(1), b(2) and c(9-12). The alpha and beta chains form an alternating ring which encloses part of the gamma chain. CF(1) is attached to CF(0) by a central stalk formed by the gamma and epsilon chains, while a peripheral stalk is formed by the delta and b chains.

It is found in the cell inner membrane. The catalysed reaction is ATP + H2O + 4 H(+)(in) = ADP + phosphate + 5 H(+)(out). Functionally, produces ATP from ADP in the presence of a proton gradient across the membrane. The alpha chain is a regulatory subunit. The protein is ATP synthase subunit alpha of Flavobacterium johnsoniae (strain ATCC 17061 / DSM 2064 / JCM 8514 / BCRC 14874 / CCUG 350202 / NBRC 14942 / NCIMB 11054 / UW101) (Cytophaga johnsonae).